A 395-amino-acid polypeptide reads, in one-letter code: Capsid protein (395 aa).

Positions Met-1–Ile-41 are enriched in basic residues. Residues Met-1–Met-51 are disordered. The Nuclear localization signal signature appears at Ala-2–Ser-9.

It localises to the host nucleus. The protein resides in the virion. Self-assembles to form the virion icosahedral capsid. This is Capsid protein from Chaetoceros setoense (Chaetoceros setoense DNA virus).